Reading from the N-terminus, the 512-residue chain is Alpha-1B-glycoprotein (512 aa).

The signal sequence occupies residues 1–18; that stretch reads MSLLATVLLLWGFTLGPG. Ig-like V-type domains follow at residues 22 to 126, 127 to 219, 220 to 312, 313 to 415, and 416 to 512; these read MLDS…VTGK, EPLP…MYAS, QAPP…PVEL, MWSD…LRVN, and GPPP…IVEG. Residues Asn-44, Asn-89, and Asn-192 are each glycosylated (N-linked (GlcNAc...) asparagine). 5 disulfide bridges follow: Cys-49-Cys-96, Cys-153-Cys-195, Cys-245-Cys-292, Cys-343-Cys-392, and Cys-441-Cys-488. N-linked (GlcNAc...) asparagine glycosylation is found at Asn-369, Asn-381, Asn-389, and Asn-485.

In terms of assembly, interacts with CRISP3. As to expression, expressed in the liver hepatocytes of male and female GH transgenic mice and in the liver of female, but not of male, non-transgenic mice.

Its subcellular location is the secreted. The polypeptide is Alpha-1B-glycoprotein (A1bg) (Mus musculus (Mouse)).